The primary structure comprises 164 residues: Putative glutamine amidotransferase-like protein RP713 (164 aa).

The 126-residue stretch at 39–164 (TIANPNSLFM…VITVKIIIYM (126 aa)) folds into the Glutamine amidotransferase type-1 domain.

This Rickettsia prowazekii (strain Madrid E) protein is Putative glutamine amidotransferase-like protein RP713.